We begin with the raw amino-acid sequence, 258 residues long: MATLINFNDTNKLLLTKQPSLFIDLASKDWIASANQAIKQRGAFYVALSGGKTPLEIYKDIVINKDKLIDPSKIFLFWGDERLAPITSSESNYGQAMSILRDLNIPDEQIFRMETENPDGAKKYQELIENKIPDASFDMIMLGLGEDGHTLSLFSNTSALEEENDLVVFNSVPHLETERMTLTFPCVHKGKHVVVYVQGENKKPILKSVFFSEGREEKLYPIERVGRDRSPLFWIISPESYDIADFDNISSIYKMDIL.

This sequence belongs to the glucosamine/galactosamine-6-phosphate isomerase family. 6-phosphogluconolactonase subfamily.

It carries out the reaction 6-phospho-D-glucono-1,5-lactone + H2O = 6-phospho-D-gluconate + H(+). It participates in carbohydrate degradation; pentose phosphate pathway; D-ribulose 5-phosphate from D-glucose 6-phosphate (oxidative stage): step 2/3. Its function is as follows. Hydrolysis of 6-phosphogluconolactone to 6-phosphogluconate. The chain is 6-phosphogluconolactonase (pgl) from Chlamydia pneumoniae (Chlamydophila pneumoniae).